The sequence spans 346 residues: Dihydroorotase (346 aa).

Residues His-14 and His-16 each contribute to the Zn(2+) site. Substrate is bound by residues 16 to 18 (HLR) and Asn-42. Zn(2+) contacts are provided by Lys-100, His-137, and His-175. An N6-carboxylysine modification is found at Lys-100. His-137 is a substrate binding site. Leu-220 contacts substrate. Asp-248 contributes to the Zn(2+) binding site. Asp-248 is an active-site residue. Substrate contacts are provided by His-252 and Ala-264.

Belongs to the metallo-dependent hydrolases superfamily. DHOase family. Class II DHOase subfamily. As to quaternary structure, homodimer. The cofactor is Zn(2+).

The enzyme catalyses (S)-dihydroorotate + H2O = N-carbamoyl-L-aspartate + H(+). The protein operates within pyrimidine metabolism; UMP biosynthesis via de novo pathway; (S)-dihydroorotate from bicarbonate: step 3/3. In terms of biological role, catalyzes the reversible cyclization of carbamoyl aspartate to dihydroorotate. The protein is Dihydroorotase of Novosphingobium aromaticivorans (strain ATCC 700278 / DSM 12444 / CCUG 56034 / CIP 105152 / NBRC 16084 / F199).